Consider the following 249-residue polypeptide: 1-(5-phosphoribosyl)-5-[(5-phosphoribosylamino)methylideneamino] imidazole-4-carboxamide isomerase (249 aa).

Residue D8 is the Proton acceptor of the active site. Catalysis depends on D131, which acts as the Proton donor.

The protein belongs to the HisA/HisF family.

It is found in the cytoplasm. It catalyses the reaction 1-(5-phospho-beta-D-ribosyl)-5-[(5-phospho-beta-D-ribosylamino)methylideneamino]imidazole-4-carboxamide = 5-[(5-phospho-1-deoxy-D-ribulos-1-ylimino)methylamino]-1-(5-phospho-beta-D-ribosyl)imidazole-4-carboxamide. It participates in amino-acid biosynthesis; L-histidine biosynthesis; L-histidine from 5-phospho-alpha-D-ribose 1-diphosphate: step 4/9. This chain is 1-(5-phosphoribosyl)-5-[(5-phosphoribosylamino)methylideneamino] imidazole-4-carboxamide isomerase, found in Leptothrix cholodnii (strain ATCC 51168 / LMG 8142 / SP-6) (Leptothrix discophora (strain SP-6)).